The sequence spans 272 residues: Ribosome maturation factor RimP (272 aa).

The interval Gln-209–Asp-272 is disordered. The segment covering Asn-250–Ile-266 has biased composition (basic and acidic residues).

This sequence belongs to the RimP family.

The protein localises to the cytoplasm. In terms of biological role, required for maturation of 30S ribosomal subunits. This chain is Ribosome maturation factor RimP, found in Rhodopseudomonas palustris (strain BisA53).